The chain runs to 414 residues: 2,3-diketo-5-methylthiopentyl-1-phosphate enolase (414 aa).

K99 functions as the Proton acceptor in the catalytic mechanism. Residues K148, 174 to 177 (KDDE), H265, G338, and 360 to 361 (GG) contribute to the substrate site. The Mg(2+) site is built by K174, D176, and E177. N6-carboxylysine is present on K174.

It belongs to the RuBisCO large chain family. Type IV subfamily. As to quaternary structure, homodimer. Mg(2+) serves as cofactor.

It carries out the reaction 5-methylsulfanyl-2,3-dioxopentyl phosphate = 2-hydroxy-5-methylsulfanyl-3-oxopent-1-enyl phosphate. Its pathway is amino-acid biosynthesis; L-methionine biosynthesis via salvage pathway; L-methionine from S-methyl-5-thio-alpha-D-ribose 1-phosphate: step 3/6. Functionally, catalyzes the enolization of 2,3-diketo-5-methylthiopentyl-1-phosphate (DK-MTP-1-P) into 2-hydroxy-3-keto-5-methylthiopentenyl-1-phosphate (HK-MTPenyl-1-P). The protein is 2,3-diketo-5-methylthiopentyl-1-phosphate enolase of Bacillus thuringiensis (strain Al Hakam).